Reading from the N-terminus, the 369-residue chain is 3-dehydroquinate synthase (369 aa).

NAD(+) is bound by residues 70-75 (DAEDGK), 104-108 (GAATD), 128-129 (TT), lysine 141, lysine 150, and 168-171 (TLET). Zn(2+) is bound by residues glutamate 183, histidine 246, and histidine 262.

Belongs to the sugar phosphate cyclases superfamily. Dehydroquinate synthase family. It depends on Co(2+) as a cofactor. Requires Zn(2+) as cofactor. NAD(+) serves as cofactor.

It localises to the cytoplasm. It carries out the reaction 7-phospho-2-dehydro-3-deoxy-D-arabino-heptonate = 3-dehydroquinate + phosphate. The protein operates within metabolic intermediate biosynthesis; chorismate biosynthesis; chorismate from D-erythrose 4-phosphate and phosphoenolpyruvate: step 2/7. Functionally, catalyzes the conversion of 3-deoxy-D-arabino-heptulosonate 7-phosphate (DAHP) to dehydroquinate (DHQ). In Rhodococcus erythropolis (strain PR4 / NBRC 100887), this protein is 3-dehydroquinate synthase.